A 694-amino-acid chain; its full sequence is Probable methyltransferase PMT11 (694 aa).

The Cytoplasmic segment spans residues 1-14 (MKPLTNGDLFKSPT). A helical; Signal-anchor for type II membrane protein transmembrane segment spans residues 15-32 (LIKISALVFVTVAFFYLG). Topologically, residues 33–694 (KHWSDDGYQQ…LTCEKRLLRA (662 aa)) are lumenal. Asparagine 69 and asparagine 77 each carry an N-linked (GlcNAc...) asparagine glycan. Residues 83–128 (IPATIRQQPPSVVADTEKVKVEANPPPPPPPSPSPPPPPGPVKSFG) are disordered. Over residues 106 to 123 (NPPPPPPPSPSPPPPPGP) the composition is skewed to pro residues. Residues asparagine 155, asparagine 378, and asparagine 423 are each glycosylated (N-linked (GlcNAc...) asparagine).

The protein belongs to the methyltransferase superfamily.

Its subcellular location is the golgi apparatus membrane. This Arabidopsis thaliana (Mouse-ear cress) protein is Probable methyltransferase PMT11.